We begin with the raw amino-acid sequence, 99 residues long: Aspartyl/glutamyl-tRNA(Asn/Gln) amidotransferase subunit C (99 aa).

This sequence belongs to the GatC family. As to quaternary structure, heterotrimer of A, B and C subunits.

It carries out the reaction L-glutamyl-tRNA(Gln) + L-glutamine + ATP + H2O = L-glutaminyl-tRNA(Gln) + L-glutamate + ADP + phosphate + H(+). The catalysed reaction is L-aspartyl-tRNA(Asn) + L-glutamine + ATP + H2O = L-asparaginyl-tRNA(Asn) + L-glutamate + ADP + phosphate + 2 H(+). In terms of biological role, allows the formation of correctly charged Asn-tRNA(Asn) or Gln-tRNA(Gln) through the transamidation of misacylated Asp-tRNA(Asn) or Glu-tRNA(Gln) in organisms which lack either or both of asparaginyl-tRNA or glutaminyl-tRNA synthetases. The reaction takes place in the presence of glutamine and ATP through an activated phospho-Asp-tRNA(Asn) or phospho-Glu-tRNA(Gln). The polypeptide is Aspartyl/glutamyl-tRNA(Asn/Gln) amidotransferase subunit C (Burkholderia vietnamiensis (strain G4 / LMG 22486) (Burkholderia cepacia (strain R1808))).